An 878-amino-acid polypeptide reads, in one-letter code: DNA mismatch repair protein MutS (878 aa).

629-636 (GPNMAGKS) serves as a coordination point for ATP.

Belongs to the DNA mismatch repair MutS family.

In terms of biological role, this protein is involved in the repair of mismatches in DNA. It is possible that it carries out the mismatch recognition step. This protein has a weak ATPase activity. The chain is DNA mismatch repair protein MutS from Roseobacter denitrificans (strain ATCC 33942 / OCh 114) (Erythrobacter sp. (strain OCh 114)).